The following is a 726-amino-acid chain: uncharacterized protein (726 aa).

Catalysis depends on charge relay system residues Ser-583 and His-698.

It belongs to the peptidase S9B family.

This is an uncharacterized protein from Sinorhizobium fredii (strain NBRC 101917 / NGR234).